Here is a 479-residue protein sequence, read N- to C-terminus: Ribosomal RNA small subunit methyltransferase F (479 aa).

S-adenosyl-L-methionine-binding positions include 125-131 (AAAPGSK), Glu149, Asp176, and Asp194. Cys247 acts as the Nucleophile in catalysis.

The protein belongs to the class I-like SAM-binding methyltransferase superfamily. RsmB/NOP family.

The protein resides in the cytoplasm. The catalysed reaction is cytidine(1407) in 16S rRNA + S-adenosyl-L-methionine = 5-methylcytidine(1407) in 16S rRNA + S-adenosyl-L-homocysteine + H(+). In terms of biological role, specifically methylates the cytosine at position 1407 (m5C1407) of 16S rRNA. In Escherichia coli O139:H28 (strain E24377A / ETEC), this protein is Ribosomal RNA small subunit methyltransferase F.